A 298-amino-acid polypeptide reads, in one-letter code: MNKDRVKLAIAPIGWTNDDMPDLGKENTFQQCISEMALAGFIGSEVGSKYPRDPNVLKPMLELRGMQICNAWFSTFFADGQRARTIDEFTNHMNFLHAMGAKVIGCSEQSKSIQGTTKAIFEEKPYFTDTEWQRVAEGYNELAKIAATKGMQVCLHHHMGTGIQTTEEIDRYMSMVNDDVYLLFDTGHAYYSEGSQEAMLAILEKYLPRINHVHLKDVRDEVVAEVKAKKLSFLDGVKKGTFTVPGDGVIDFRPVFKLLDEKGYQGWMVVEAEQDPAIANPFEYAVKARRYIKETAGI.

The protein belongs to the IolE/MocC family. Glutathione serves as cofactor. Requires Co(2+) as cofactor. Mn(2+) is required as a cofactor.

The enzyme catalyses scyllo-inosose = 3D-3,5/4-trihydroxycyclohexane-1,2-dione + H2O. Its function is as follows. Catalyzes the dehydration of inosose (2-keto-myo-inositol, 2KMI or 2,4,6/3,5-pentahydroxycyclohexanone) to 3D-(3,5/4)-trihydroxycyclohexane-1,2-dione (D-2,3-diketo-4-deoxy-epi-inositol). In Yersinia enterocolitica serotype O:8 / biotype 1B (strain NCTC 13174 / 8081), this protein is Inosose dehydratase.